The sequence spans 341 residues: Arfaptin-2 (341 aa).

A disordered region spans residues 46-85 (NETSIVSGGYGGSGDGLIPTGSGRHPSHSTTPSGPGDEVA). S72 carries the phosphoserine modification. Position 76 is a phosphothreonine (T76). The AH domain maps to 121-321 (TVDLELELQI…NQKQLEQTLQ (201 aa)).

Forms homodimers or heterodimers with ARFIP1. Interacts with RAC1. Specifically binds to GTP-bound ARF1 and ARF6, but binds to RAC1.GTP and RAC1.GDP with similar affinities. Interacts with ARL1. Interacts (via N-terminus) with IKBKB and IKBKG; these interactions inhibit activation of NF-kappa-B.

It is found in the golgi apparatus. It localises to the trans-Golgi network membrane. Functionally, plays a role in constitutive metalloproteinase (MMP) secretion from the trans Golgi network. May have important functions during vesicle biogenesis at certain cargo subdomains, which could be predominantly utilized by secreted MMPs, such as MMP7 and MMP2. Also involved in autophagy by regulating the starvation-dependent trafficking of ATG9A vesicles which deliver the phosphatidylinositol 4-kinase beta (PI4KB) to the autophagosome initiation site. Involved in phagophore growth during mitophagy by regulating ATG9A trafficking to mitochondria. In addition, plays a role in NF-kappa-B inhibition by interacting with IKBKB and IKBKG. The sequence is that of Arfaptin-2 from Homo sapiens (Human).